We begin with the raw amino-acid sequence, 343 residues long: Membrane progestin receptor delta (343 aa).

Over 1 to 49 (MLSLKMPQLLRVHQVPRVFWEEGIMSGYRCPTSSALDCVLSSFQMTNET) the chain is Cytoplasmic. Residues 50–70 (VNIWTHFLPTWYFLWRLLALG) form a helical membrane-spanning segment. Residues 71-79 (SPGFRADPY) are Extracellular-facing. The helical transmembrane segment at 80-100 (HLPLLVFLLPACLYPFASCCA) threads the bilayer. Over 101–112 (HTFSSMSPRARH) the chain is Cytoplasmic. Residues 113–133 (ICYFLDYGALSLYSLGCAFPY) traverse the membrane as a helical segment. Over 134-146 (AAYSMPASWLHSR) the chain is Extracellular. A helical membrane pass occupies residues 147 to 167 (LHQLFVPAAALNSFLCTGLSC). The Cytoplasmic portion of the chain corresponds to 168–216 (YSRFPELEYPGFSKALRTAAFAYPFLFDNLPLFYRLRLCWGGAHSCGRD). A helical transmembrane segment spans residues 217–237 (ALSSNHGYHLLCALLSGFLFA). Residues 238-257 (ARLPERLAPGRFDYIGHSHQ) are Extracellular-facing. The chain crosses the membrane as a helical span at residues 258-278 (LFHICAVLGTHFQLEAVLADM). At 279–291 (GSRRAWLAVQEPT) the chain is on the cytoplasmic side. A helical transmembrane segment spans residues 292 to 312 (LGLGATVATLSLAVIGNLFII). The Extracellular segment spans residues 313–343 (AAFTASLLRMPGPCPLLQGSPLEEGLQAKQQ).

Belongs to the ADIPOR family. Homodimer.

Its subcellular location is the cell membrane. Its function is as follows. Plasma membrane progesterone (P4) receptor coupled to G proteins. Seems to act through a G(s) mediated pathway. Involved in neurosteroid inhibition of apoptosis. May be involved in regulating rapid P4 signaling in the nervous system. Also binds dehydroepiandrosterone (DHEA), pregnanolone, pregnenolone and allopregnanolone. This Mus musculus (Mouse) protein is Membrane progestin receptor delta.